Reading from the N-terminus, the 406-residue chain is MRTKTQKKSQEKTNLNLSGYNRMMKLITQTTDLEIALATLRNSDFVTIDTEFIRETTFWPQLCLIQLASPDTTVLIDPISQDIDLKPFFDLMVNKKIVKVFHAARQDIETIYHLGGVIPSPLFDTQIAGSICGFGDSISYDQIVQRCTGYQLDKSSRFTDWSFRPLSEKQLLYALADVTYLRDVYLLLKKQLEKNKRTHWMDDEIAVLLEPKTYDMPENEAWKKVKGKIKKPRELAVLQKIAAWRERKARQYNIPRRHIIKDECLIEIAIQQPKDEADLKRLRSLNKNWDKFSIAHTLIKAVHEGLEVDLATLPALPKHNPLNETSSAVIDLLKVLLKLVANENGIAPKIIATSNDLEKIANGCIKKNIPAMNGWRYEIFGQKAEQMLKGKIGFYLSNGKINTKQL.

The 3'-5' exonuclease domain maps to 26 to 193 (LITQTTDLEI…VYLLLKKQLE (168 aa)). The HRDC domain occupies 231 to 312 (KPRELAVLQK…HEGLEVDLAT (82 aa)).

It belongs to the RNase D family. A divalent metal cation is required as a cofactor.

The protein localises to the cytoplasm. It carries out the reaction Exonucleolytic cleavage that removes extra residues from the 3'-terminus of tRNA to produce 5'-mononucleotides.. Its function is as follows. Exonuclease involved in the 3' processing of various precursor tRNAs. Initiates hydrolysis at the 3'-terminus of an RNA molecule and releases 5'-mononucleotides. The sequence is that of Ribonuclease D from Bartonella henselae (strain ATCC 49882 / DSM 28221 / CCUG 30454 / Houston 1) (Rochalimaea henselae).